A 345-amino-acid polypeptide reads, in one-letter code: MENGTEGKNFYIPMNNRTGLVRSPYEYPQYYLADPWQFKLLGIYMFFLILTGFPINALTLVVTAQNKKLRQPLNFILVNLAVAGLIMVCFGFTVCIYSCMVGYFSLGPLGCTIEGFMATLGGQVSLWSLVVLAIERYIVVCKPMGSFKFTATHSAAGCAFTWIMASSCAVPPLVGWSRYIPEGIQVSCGPDYYTLAPGFNNESFVMYMFSCHFCVPVFTIFFTYGSLVMTVKAAAAQQQDSASTQKAEKEVTRMCFLMVLGFLLAWVPYASYAAWIFFNRGAAFSAMSMAIPSFFSKSSALFNPIIYILLNKQFRNCMLATIGMGGMVEDETSVSTSKTEVSTAA.

Topologically, residues 1 to 37 (MENGTEGKNFYIPMNNRTGLVRSPYEYPQYYLADPWQ) are extracellular. N-linked (GlcNAc...) asparagine glycans are attached at residues N3 and N16. The helical transmembrane segment at 38–62 (FKLLGIYMFFLILTGFPINALTLVV) threads the bilayer. Residues 63 to 74 (TAQNKKLRQPLN) are Cytoplasmic-facing. A helical membrane pass occupies residues 75–100 (FILVNLAVAGLIMVCFGFTVCIYSCM). Residues 101-114 (VGYFSLGPLGCTIE) lie on the Extracellular side of the membrane. C111 and C188 are disulfide-bonded. Residues 115-134 (GFMATLGGQVSLWSLVVLAI) form a helical membrane-spanning segment. The Cytoplasmic portion of the chain corresponds to 135–153 (ERYIVVCKPMGSFKFTATH). The helical transmembrane segment at 154-177 (SAAGCAFTWIMASSCAVPPLVGWS) threads the bilayer. Over 178–203 (RYIPEGIQVSCGPDYYTLAPGFNNES) the chain is Extracellular. N-linked (GlcNAc...) asparagine glycosylation is present at N201. Residues 204 to 231 (FVMYMFSCHFCVPVFTIFFTYGSLVMTV) traverse the membrane as a helical segment. The Cytoplasmic segment spans residues 232-253 (KAAAAQQQDSASTQKAEKEVTR). The helical transmembrane segment at 254–277 (MCFLMVLGFLLAWVPYASYAAWIF) threads the bilayer. Topologically, residues 278-285 (FNRGAAFS) are extracellular. A helical transmembrane segment spans residues 286–310 (AMSMAIPSFFSKSSALFNPIIYILL). K297 is modified (N6-(retinylidene)lysine). The Cytoplasmic segment spans residues 311-345 (NKQFRNCMLATIGMGGMVEDETSVSTSKTEVSTAA).

Belongs to the G-protein coupled receptor 1 family. Opsin subfamily. Post-translationally, phosphorylated on some or all of the serine and threonine residues present in the C-terminal region. As to expression, the color pigments are found in the cone photoreceptor cells.

Its subcellular location is the membrane. Functionally, visual pigments are the light-absorbing molecules that mediate vision. They consist of an apoprotein, opsin, covalently linked to cis-retinal. The sequence is that of Green-sensitive opsin from Oryzias latipes (Japanese rice fish).